The chain runs to 149 residues: Probable ubiquitin-conjugating enzyme E2 W (149 aa).

The 146-residue stretch at 4 to 149 (RYAKRLQKEL…VRWMFHDDTV (146 aa)) folds into the UBC core domain. Cys88 (glycyl thioester intermediate) is an active-site residue.

It belongs to the ubiquitin-conjugating enzyme family.

It carries out the reaction S-ubiquitinyl-[E1 ubiquitin-activating enzyme]-L-cysteine + [E2 ubiquitin-conjugating enzyme]-L-cysteine = [E1 ubiquitin-activating enzyme]-L-cysteine + S-ubiquitinyl-[E2 ubiquitin-conjugating enzyme]-L-cysteine.. The catalysed reaction is S-ubiquitinyl-[E1 ubiquitin-activating enzyme]-L-cysteine + [acceptor protein]-N-terminal-amino acid = [E1 ubiquitin-activating enzyme]-L-cysteine + N-terminal-ubiquitinyl-[acceptor protein].. It functions in the pathway protein modification; protein ubiquitination. Its function is as follows. Catalyzes the covalent attachment of ubiquitin to other proteins. This chain is Probable ubiquitin-conjugating enzyme E2 W (ube2w), found in Dictyostelium discoideum (Social amoeba).